A 338-amino-acid chain; its full sequence is Cilia- and flagella-associated protein 36 (338 aa).

Positions 142–179 form a coiled coil; the sequence is ISDLEQEEMKLVSEALRLSKEEYEREQLRRSAKELNCT. 2 disordered regions span residues 175–220 and 281–314; these read ELNC…ESPY and KKQE…KKSL. The segment covering 187–202 has biased composition (polar residues); sequence KQSNGSERTPSNTELP. The stretch at 255–330 forms a coiled coil; sequence NLSQAEKEQL…AEKLKEEVIL (76 aa).

Belongs to the CFAP36 family.

It is found in the nucleus. The protein resides in the cytoplasm. It localises to the cell projection. The protein localises to the cilium. Its subcellular location is the flagellum. In Xenopus laevis (African clawed frog), this protein is Cilia- and flagella-associated protein 36.